Consider the following 79-residue polypeptide: Ornithine decarboxylase (79 aa).

Pyridoxal 5'-phosphate contacts are provided by residues Ser-8, Gly-45, and 75 to 78 (EPGR).

The protein belongs to the Orn/Lys/Arg decarboxylase class-II family. In terms of assembly, homodimer. Only the dimer is catalytically active, as the active sites are constructed of residues from both monomers. It depends on pyridoxal 5'-phosphate as a cofactor.

The protein localises to the cytoplasm. The enzyme catalyses L-ornithine + H(+) = putrescine + CO2. The protein operates within amine and polyamine biosynthesis; putrescine biosynthesis via L-ornithine pathway; putrescine from L-ornithine: step 1/1. Inhibited by antizyme (AZ) OAZ1 in response to polyamine levels. AZ inhibits the assembly of the functional homodimer by binding to ODC monomers and targeting them for ubiquitin-independent proteolytic destruction by the 26S proteasome. Its function is as follows. Catalyzes the first and rate-limiting step of polyamine biosynthesis that converts ornithine into putrescine, which is the precursor for the polyamines, spermidine and spermine. Polyamines are essential for cell proliferation and are implicated in cellular processes, ranging from DNA replication to apoptosis. This chain is Ornithine decarboxylase (ODC), found in Paracoccidioides brasiliensis.